We begin with the raw amino-acid sequence, 217 residues long: Snake venom metalloproteinase lebetase-4 (217 aa).

A propeptide spanning residues 1-14 is cleaved from the precursor; that stretch reads SCRKKASQLNLTPE. Glutamine 15 carries the pyrrolidone carboxylic acid modification. The Peptidase M12B domain occupies 21–217; it reads RYIELVIVAD…HNPQCILNQP (197 aa). Ca(2+)-binding residues include glutamate 24 and aspartate 108. 3 disulfide bridges follow: cysteine 132–cysteine 212, cysteine 172–cysteine 196, and cysteine 174–cysteine 179. Histidine 157 provides a ligand contact to Zn(2+). Residue glutamate 158 is part of the active site. Histidine 161 and histidine 167 together coordinate Zn(2+). Residues cysteine 212 and asparagine 215 each contribute to the Ca(2+) site.

The protein belongs to the venom metalloproteinase (M12B) family. P-I subfamily. In terms of assembly, monomer. Zn(2+) is required as a cofactor. Expressed by the venom gland.

The protein resides in the secreted. Its activity is regulated as follows. Fibrinolytic and caseinolytic activities are inhibited by Cd(2+), Cu(2+) and Co(2+) ions. Not inhibited by Mg(2+), Ca(2+) and Ba(2+). Also inhibited by EDTA, EGTA and 1,10-phenanthroline. Functionally, snake venom zinc metalloprotease that hydrolyzes the Aalpha-chain and more slowly the Bbeta-chain of fibrin and fibrinogen. Also hydrolyzes casein and B-chain of oxidized insulin. Its fibrinolytic activity is direct, without any plasminogen activation. Inhibits ADP-induced and collagen-induced platelet aggregation. Shows low hemorrhagic activity. Cleaves the plasma proteinase inhibitors alpha(2)-macroglobulin (A2M) and alpha(2)M-related pregnancy zone protein (PZP), and is inhibited by them. The polypeptide is Snake venom metalloproteinase lebetase-4 (Macrovipera lebetinus (Levantine viper)).